We begin with the raw amino-acid sequence, 121 residues long: MIQQESRLVVADNSGAKEALCIRVLGGTRRRYASVGDIIVVSVKSVIPSSDIKKGAVSKAVIVRTKKEVRRPDGSYIRFDDNACVLLNAAGDIRGSRIFGPVARELRGTNMKIVSLAPEVL.

Belongs to the universal ribosomal protein uL14 family. Part of the 50S ribosomal subunit. Forms a cluster with proteins L3 and L19. In the 70S ribosome, L14 and L19 interact and together make contacts with the 16S rRNA in bridges B5 and B8.

Functionally, binds to 23S rRNA. Forms part of two intersubunit bridges in the 70S ribosome. This is Large ribosomal subunit protein uL14 from Porphyromonas gingivalis (strain ATCC 33277 / DSM 20709 / CIP 103683 / JCM 12257 / NCTC 11834 / 2561).